A 321-amino-acid polypeptide reads, in one-letter code: Peptide transport system permease protein SapB (321 aa).

At 1–8 the chain is on the cytoplasmic side; that stretch reads MIIFTLRR. The chain crosses the membrane as a helical span at residues 9 to 29; it reads LLLLLVTLFFLTFIGFSLSYF. Residues 30–80 lie on the Periplasmic side of the membrane; sequence TPHAPLQGASLWNAWVFWFNGLLHWDFGVSSINGQLISEQLKEVFPATMEL. The ABC transmembrane type-1 domain occupies 74-302; sequence FPATMELCIL…SLVIVVNVIS (229 aa). Residues 81 to 101 traverse the membrane as a helical segment; that stretch reads CILAFGFALMVGIPVGMLAGV. The Cytoplasmic segment spans residues 102-113; that stretch reads TRSKWPDRFISA. A helical transmembrane segment spans residues 114–134; that stretch reads LALLGFSIPVFWLALLLTLFF. The Periplasmic portion of the chain corresponds to 135–174; the sequence is SLTLGWLPVSGRFDLLYEVKPVTGFAIIDAWISDSPWRDE. Residues 175–195 form a helical membrane-spanning segment; that stretch reads MVMSAIRHMVLPVLTLSVAPT. Topologically, residues 196–248 are cytoplasmic; it reads TEVIRLMRISTIEVYDQNYVKAAATRGLSRFTILRRHVLHNALPPVIPRLGLQ. The helical transmembrane segment at 249-269 threads the bilayer; that stretch reads FSTMLTLAMITEMVFSWPGLG. The Periplasmic segment spans residues 270-280; it reads RWLIHAIRQQD. Residues 281–301 traverse the membrane as a helical segment; sequence YAAISAGVMVIGSLVIVVNVI. Residues 302–321 lie on the Cytoplasmic side of the membrane; the sequence is SDILGAMANPLKHKEWYALR.

The protein belongs to the binding-protein-dependent transport system permease family. OppBC subfamily.

It is found in the cell inner membrane. Involved in a peptide intake transport system that plays a role in the resistance to antimicrobial peptides. The polypeptide is Peptide transport system permease protein SapB (Salmonella typhimurium (strain LT2 / SGSC1412 / ATCC 700720)).